The sequence spans 373 residues: MTDVELRVEALSLSDVSAIPPEYVRLEEERTDLGDALEVARAASDDADAARIPVVDISAFDGDGRRACVEAVRAAAEEWGVMHIAGHGLPGDVLDRLRAAGEAFFALPIAEKEAYANDPAAGRLQGYGSKLAANASGKREWEDYLFHLVHPDHLADHSLWPANPPEYVPVSRDFGGRVRTLASKLLAILSLGLGLPEETLERRLRRHDQHGVDDDLLLQLKINYYPRCPRPDLAVGVEAHTDVSALSFILHNGVPGLQAHHAGTWVTARSEQGTIVVHVGDALEILTNGRYTSVLHRSLVSRDAVRVSWVVFCEPPPESVLLQPLPELLANGAGKPLFAPRTFKQHVQRKLFKKLKDQQDNNAAAASNGIIPK.

The Fe2OG dioxygenase domain maps to 216–315; sequence LLLQLKINYY…RVSWVVFCEP (100 aa). Residues H240, D242, and H296 each coordinate Fe cation. R306 lines the 2-oxoglutarate pocket.

The protein belongs to the iron/ascorbate-dependent oxidoreductase family. Requires L-ascorbate as cofactor. Fe(2+) serves as cofactor.

The enzyme catalyses a (2R,3S,4S)-leucoanthocyanidin + 2-oxoglutarate + O2 = a 4-H-anthocyanidin with a 3-hydroxy group + succinate + CO2 + 2 H2O. Its pathway is pigment biosynthesis; anthocyanin biosynthesis. Functionally, involved in anthocyanin and protoanthocyanidin biosynthesis by catalyzing the oxidation of leucoanthocyanidins into anthocyanidins. This chain is Leucoanthocyanidin dioxygenase 2, found in Oryza sativa subsp. japonica (Rice).